The chain runs to 275 residues: Catechol 1,2-dioxygenase 2 (275 aa).

The Fe cation site is built by Tyr-158, Tyr-192, His-216, and His-218.

The protein belongs to the intradiol ring-cleavage dioxygenase family. Homodimer. Fe(3+) is required as a cofactor.

The catalysed reaction is catechol + O2 = cis,cis-muconate + 2 H(+). It participates in aromatic compound metabolism; beta-ketoadipate pathway; 5-oxo-4,5-dihydro-2-furylacetate from catechol: step 1/3. In terms of biological role, can cleave 4-methyl-, 4-chloro-, and 3-methoxycatechol at lower rates than catechol, but has no activity with 4-nitrocatechol or protocatechuic acid. In Acinetobacter lwoffii, this protein is Catechol 1,2-dioxygenase 2 (catA2).